The sequence spans 610 residues: Alpha-fetoprotein (610 aa).

The first 18 residues, 1 to 18 (MKWVVSFFLLFLLNFSDS), serve as a signal peptide directing secretion. Albumin domains follow at residues 19 to 210 (RTMH…TSIT), 211 to 403 (KELR…EELE), and 404 to 602 (KYIQ…ALIS). Histidine 22 is a binding site for Cu(2+). 8 disulfides stabilise this stretch: cysteine 99–cysteine 114, cysteine 113–cysteine 124, cysteine 148–cysteine 193, cysteine 192–cysteine 201, cysteine 224–cysteine 270, cysteine 269–cysteine 277, cysteine 289–cysteine 303, and cysteine 302–cysteine 314. A phosphoserine mark is found at serine 111 and serine 115. Asparagine 197 and asparagine 251 each carry an N-linked (GlcNAc...) asparagine glycan. At serine 345 the chain carries Phosphoserine. Intrachain disulfides connect cysteine 385-cysteine 394, cysteine 417-cysteine 463, cysteine 462-cysteine 473, cysteine 486-cysteine 502, cysteine 501-cysteine 512, cysteine 539-cysteine 584, and cysteine 583-cysteine 592. Serine 445 is subject to Phosphoserine.

It belongs to the ALB/AFP/VDB family. In terms of assembly, dimeric and trimeric forms have been found in addition to the monomeric form. Sulfated. Plasma.

Its subcellular location is the secreted. Its function is as follows. Binds copper, nickel, and fatty acids as well as, and bilirubin less well than, serum albumin. This is Alpha-fetoprotein (AFP) from Bos taurus (Bovine).